A 130-amino-acid polypeptide reads, in one-letter code: Small ribosomal subunit protein uS8 (130 aa).

It belongs to the universal ribosomal protein uS8 family.

The sequence is that of Small ribosomal subunit protein uS8 (rps22) from Agaricus bisporus (White button mushroom).